The chain runs to 323 residues: MGTAAAAAAAGEGARGPSPAAVSLGLGVAVVSSLVNGSTFVLQKKGIVRAKRRGTSYLTDIVWWAGTIAMAVGQIGNFLAYTAVPTVLVTPLGALGVPFGSILASYLLKEKLNILGKLGCLLSCAGSVVLIIHSPKSESVTTQAELEEKLTNPVFVGYLCIVLLMLLLLIFWIAPAHGPTNIMVYISICSLLGSFTVPSTKGIGLAAQDILHNNPSSQRALCLCLVLLAVLGCSIIVQFRYINKALECFDSSVFGAIYYVVFTTLVLLASAILFREWSNVGLVDFLGMACGFTTVSVGIVLIQVFKEFNFNLGEMNKSNMKTD.

Residues 1–21 (MGTAAAAAAAGEGARGPSPAA) lie on the Extracellular side of the membrane. A helical membrane pass occupies residues 22-42 (VSLGLGVAVVSSLVNGSTFVL). Residues 43–60 (QKKGIVRAKRRGTSYLTD) lie on the Cytoplasmic side of the membrane. Residues 61 to 81 (IVWWAGTIAMAVGQIGNFLAY) form a helical membrane-spanning segment. A topological domain (extracellular) is located at residue threonine 82. The chain crosses the membrane as a helical span at residues 83 to 103 (AVPTVLVTPLGALGVPFGSIL). Topologically, residues 104–111 (ASYLLKEK) are cytoplasmic. A helical membrane pass occupies residues 112–132 (LNILGKLGCLLSCAGSVVLII). Topologically, residues 133 to 153 (HSPKSESVTTQAELEEKLTNP) are extracellular. Residues 154 to 174 (VFVGYLCIVLLMLLLLIFWIA) traverse the membrane as a helical segment. Residues 175–177 (PAH) lie on the Cytoplasmic side of the membrane. Residues 178–198 (GPTNIMVYISICSLLGSFTVP) form a helical membrane-spanning segment. Topologically, residues 199–218 (STKGIGLAAQDILHNNPSSQ) are extracellular. A helical membrane pass occupies residues 219–239 (RALCLCLVLLAVLGCSIIVQF). Topologically, residues 240 to 253 (RYINKALECFDSSV) are cytoplasmic. The helical transmembrane segment at 254-274 (FGAIYYVVFTTLVLLASAILF) threads the bilayer. The Extracellular segment spans residues 275–284 (REWSNVGLVD). The chain crosses the membrane as a helical span at residues 285-305 (FLGMACGFTTVSVGIVLIQVF). Residues 306–323 (KEFNFNLGEMNKSNMKTD) are Cytoplasmic-facing.

The protein belongs to the NIPA family. In terms of assembly, homodimer. As to expression, widely expressed. Predominantly expressed in neuronal tissues. Brain, heart, kidney, liver and colon (at protein level).

Its subcellular location is the cell membrane. It localises to the early endosome. The catalysed reaction is Mg(2+)(in) = Mg(2+)(out). Functionally, acts as a Mg(2+) transporter. Can also transport other divalent cations such as Fe(2+), Sr(2+), Ba(2+), Zn(2+) and Co(2+) but to a much less extent than Mg(2+). This Mus musculus (Mouse) protein is Magnesium transporter NIPA1 (Nipa1).